The sequence spans 341 residues: Phosphoribosylformylglycinamidine cyclo-ligase (341 aa).

The protein belongs to the AIR synthase family.

The protein resides in the cytoplasm. The catalysed reaction is 2-formamido-N(1)-(5-O-phospho-beta-D-ribosyl)acetamidine + ATP = 5-amino-1-(5-phospho-beta-D-ribosyl)imidazole + ADP + phosphate + H(+). It functions in the pathway purine metabolism; IMP biosynthesis via de novo pathway; 5-amino-1-(5-phospho-D-ribosyl)imidazole from N(2)-formyl-N(1)-(5-phospho-D-ribosyl)glycinamide: step 2/2. The sequence is that of Phosphoribosylformylglycinamidine cyclo-ligase from Finegoldia magna (strain ATCC 29328 / DSM 20472 / WAL 2508) (Peptostreptococcus magnus).